The chain runs to 162 residues: Ribosomal RNA large subunit methyltransferase H (162 aa).

S-adenosyl-L-methionine contacts are provided by residues Leu78, Gly109, and 128 to 133 (LSALTL).

This sequence belongs to the RNA methyltransferase RlmH family. As to quaternary structure, homodimer.

The protein localises to the cytoplasm. The enzyme catalyses pseudouridine(1915) in 23S rRNA + S-adenosyl-L-methionine = N(3)-methylpseudouridine(1915) in 23S rRNA + S-adenosyl-L-homocysteine + H(+). Its function is as follows. Specifically methylates the pseudouridine at position 1915 (m3Psi1915) in 23S rRNA. The sequence is that of Ribosomal RNA large subunit methyltransferase H from Psychrobacter arcticus (strain DSM 17307 / VKM B-2377 / 273-4).